The following is a 96-amino-acid chain: Co-chaperonin GroES (96 aa).

It belongs to the GroES chaperonin family. In terms of assembly, heptamer of 7 subunits arranged in a ring. Interacts with the chaperonin GroEL.

Its subcellular location is the cytoplasm. Together with the chaperonin GroEL, plays an essential role in assisting protein folding. The GroEL-GroES system forms a nano-cage that allows encapsulation of the non-native substrate proteins and provides a physical environment optimized to promote and accelerate protein folding. GroES binds to the apical surface of the GroEL ring, thereby capping the opening of the GroEL channel. The chain is Co-chaperonin GroES from Legionella pneumophila (strain Paris).